The sequence spans 515 residues: 2,3-bisphosphoglycerate-independent phosphoglycerate mutase (515 aa).

The Mn(2+) site is built by D14 and S64. S64 serves as the catalytic Phosphoserine intermediate. Substrate-binding positions include H125, 155 to 156, R187, R193, 263 to 266, and K337; these read RD and RADR. Mn(2+) is bound by residues D404, H408, D445, H446, and H464.

This sequence belongs to the BPG-independent phosphoglycerate mutase family. In terms of assembly, monomer. It depends on Mn(2+) as a cofactor.

It catalyses the reaction (2R)-2-phosphoglycerate = (2R)-3-phosphoglycerate. Its pathway is carbohydrate degradation; glycolysis; pyruvate from D-glyceraldehyde 3-phosphate: step 3/5. Functionally, catalyzes the interconversion of 2-phosphoglycerate and 3-phosphoglycerate. This Pseudomonas aeruginosa (strain ATCC 15692 / DSM 22644 / CIP 104116 / JCM 14847 / LMG 12228 / 1C / PRS 101 / PAO1) protein is 2,3-bisphosphoglycerate-independent phosphoglycerate mutase.